A 419-amino-acid polypeptide reads, in one-letter code: UDP-N-acetylglucosamine 1-carboxyvinyltransferase 2 (419 aa).

Residue 22-23 (KN) coordinates phosphoenolpyruvate. Arginine 92 lines the UDP-N-acetyl-alpha-D-glucosamine pocket. The active-site Proton donor is cysteine 116. Cysteine 116 is subject to 2-(S-cysteinyl)pyruvic acid O-phosphothioketal. UDP-N-acetyl-alpha-D-glucosamine-binding positions include 121–125 (RPIDL), aspartate 306, and isoleucine 328.

It belongs to the EPSP synthase family. MurA subfamily.

The protein resides in the cytoplasm. It carries out the reaction phosphoenolpyruvate + UDP-N-acetyl-alpha-D-glucosamine = UDP-N-acetyl-3-O-(1-carboxyvinyl)-alpha-D-glucosamine + phosphate. The protein operates within cell wall biogenesis; peptidoglycan biosynthesis. Cell wall formation. Adds enolpyruvyl to UDP-N-acetylglucosamine. The sequence is that of UDP-N-acetylglucosamine 1-carboxyvinyltransferase 2 from Streptococcus pneumoniae (strain ATCC BAA-255 / R6).